A 206-amino-acid chain; its full sequence is Large ribosomal subunit protein uL4 (206 aa).

Residues 46 to 77 form a disordered region; that stretch reads GTRAQKDREQVKHSTKKPFKQKGTGNARAGMT.

It belongs to the universal ribosomal protein uL4 family. Part of the 50S ribosomal subunit.

One of the primary rRNA binding proteins, this protein initially binds near the 5'-end of the 23S rRNA. It is important during the early stages of 50S assembly. It makes multiple contacts with different domains of the 23S rRNA in the assembled 50S subunit and ribosome. Its function is as follows. Forms part of the polypeptide exit tunnel. The polypeptide is Large ribosomal subunit protein uL4 (Acidovorax ebreus (strain TPSY) (Diaphorobacter sp. (strain TPSY))).